A 380-amino-acid chain; its full sequence is RNA-binding motif protein, Y chromosome, family 9 (380 aa).

The RRM domain maps to 8–86 (GKIFIGGLNI…KRIKVKQARR (79 aa)). Disordered stretches follow at residues 82–226 (KQAR…STSR) and 279–358 (HEAP…YSAS). The segment covering 166-178 (RSATSAQTRSNTG) has biased composition (polar residues). Basic and acidic residues-rich tracts occupy residues 180 to 190 (RGREPHRREIS) and 333 to 351 (IDREYFDREGRQERGHSPK).

As to expression, testis-specific.

It is found in the nucleus. RNA-binding protein which may be involved in spermatogenesis. May be required for sperm development, possibly by participating in pre-mRNA splicing in the testis. The sequence is that of RNA-binding motif protein, Y chromosome, family 9 from Mus musculus (Mouse).